Consider the following 183-residue polypeptide: Bifunctional protein PyrR (183 aa).

Substrate is bound by residues 46–47 (TR), arginine 87, 107–115 (DDVIFSGRT), arginine 140, and valine 164. The PRPP-binding motif lies at 103–115 (VVLVDDVIFSGRT).

This sequence belongs to the purine/pyrimidine phosphoribosyltransferase family. PyrR subfamily.

The catalysed reaction is UMP + diphosphate = 5-phospho-alpha-D-ribose 1-diphosphate + uracil. Regulates the transcription of the pyrimidine nucleotide (pyr) operon in response to exogenous pyrimidines. In terms of biological role, also displays a weak uracil phosphoribosyltransferase activity which is not physiologically significant. This Thermosynechococcus vestitus (strain NIES-2133 / IAM M-273 / BP-1) protein is Bifunctional protein PyrR.